A 380-amino-acid polypeptide reads, in one-letter code: 1-deoxy-D-xylulose 5-phosphate reductoisomerase (380 aa).

NADPH is bound by residues Thr-10, Gly-11, Ser-12, Ile-13, Gly-35, Arg-36, Asn-37, and Asn-121. Lys-122 contacts 1-deoxy-D-xylulose 5-phosphate. Glu-123 contributes to the NADPH binding site. Mn(2+) is bound at residue Asp-147. Ser-148, Glu-149, Ser-173, and His-196 together coordinate 1-deoxy-D-xylulose 5-phosphate. A Mn(2+)-binding site is contributed by Glu-149. Gly-202 is an NADPH binding site. 1-deoxy-D-xylulose 5-phosphate contacts are provided by Ser-209, Asn-214, Lys-215, and Glu-218. Glu-218 contacts Mn(2+).

Belongs to the DXR family. Mg(2+) serves as cofactor. Mn(2+) is required as a cofactor.

It catalyses the reaction 2-C-methyl-D-erythritol 4-phosphate + NADP(+) = 1-deoxy-D-xylulose 5-phosphate + NADPH + H(+). It functions in the pathway isoprenoid biosynthesis; isopentenyl diphosphate biosynthesis via DXP pathway; isopentenyl diphosphate from 1-deoxy-D-xylulose 5-phosphate: step 1/6. Catalyzes the NADPH-dependent rearrangement and reduction of 1-deoxy-D-xylulose-5-phosphate (DXP) to 2-C-methyl-D-erythritol 4-phosphate (MEP). This is 1-deoxy-D-xylulose 5-phosphate reductoisomerase from Agathobacter rectalis (strain ATCC 33656 / DSM 3377 / JCM 17463 / KCTC 5835 / VPI 0990) (Eubacterium rectale).